The chain runs to 498 residues: Cysteine--tRNA ligase (498 aa).

A Zn(2+)-binding site is contributed by cysteine 44. The short motif at 46-56 is the 'HIGH' region element; that stretch reads PTVYSDAHLGH. The Zn(2+) site is built by cysteine 235, histidine 260, and glutamate 264. A 'KMSKS' region motif is present at residues 291-295; the sequence is KMSKS. Lysine 294 serves as a coordination point for ATP.

It belongs to the class-I aminoacyl-tRNA synthetase family. In terms of assembly, monomer. Zn(2+) serves as cofactor.

The protein localises to the cytoplasm. It carries out the reaction tRNA(Cys) + L-cysteine + ATP = L-cysteinyl-tRNA(Cys) + AMP + diphosphate. The sequence is that of Cysteine--tRNA ligase (cysS) from Deinococcus radiodurans (strain ATCC 13939 / DSM 20539 / JCM 16871 / CCUG 27074 / LMG 4051 / NBRC 15346 / NCIMB 9279 / VKM B-1422 / R1).